A 595-amino-acid chain; its full sequence is Aspartate--tRNA(Asp/Asn) ligase (595 aa).

Position 174 (E174) interacts with L-aspartate. An aspartate region spans residues Q198 to K201. R220 is a binding site for L-aspartate. Residues R220–E222 and Q229 contribute to the ATP site. Residue H452 coordinates L-aspartate. E486 lines the ATP pocket. R493 contributes to the L-aspartate binding site. G538 to R541 contributes to the ATP binding site.

Belongs to the class-II aminoacyl-tRNA synthetase family. Type 1 subfamily. In terms of assembly, homodimer.

It is found in the cytoplasm. The enzyme catalyses tRNA(Asx) + L-aspartate + ATP = L-aspartyl-tRNA(Asx) + AMP + diphosphate. Its function is as follows. Aspartyl-tRNA synthetase with relaxed tRNA specificity since it is able to aspartylate not only its cognate tRNA(Asp) but also tRNA(Asn). Reaction proceeds in two steps: L-aspartate is first activated by ATP to form Asp-AMP and then transferred to the acceptor end of tRNA(Asp/Asn). This is Aspartate--tRNA(Asp/Asn) ligase from Nitrosococcus oceani (strain ATCC 19707 / BCRC 17464 / JCM 30415 / NCIMB 11848 / C-107).